We begin with the raw amino-acid sequence, 446 residues long: Methionine aminopeptidase 2 (446 aa).

The tract at residues M1–F91 is disordered. Positions E36–V48 are enriched in acidic residues. Residues K59–A72 are compositionally biased toward basic residues. H199 is a substrate binding site. D219, D230, and H299 together coordinate a divalent metal cation. Residue H307 coordinates substrate. A divalent metal cation is bound by residues E332 and E427.

This sequence belongs to the peptidase M24A family. Methionine aminopeptidase eukaryotic type 2 subfamily. Co(2+) is required as a cofactor. The cofactor is Zn(2+). Mn(2+) serves as cofactor. It depends on Fe(2+) as a cofactor.

It is found in the cytoplasm. The catalysed reaction is Release of N-terminal amino acids, preferentially methionine, from peptides and arylamides.. Its function is as follows. Cotranslationally removes the N-terminal methionine from nascent proteins. The N-terminal methionine is often cleaved when the second residue in the primary sequence is small and uncharged (Met-Ala-, Cys, Gly, Pro, Ser, Thr, or Val). The polypeptide is Methionine aminopeptidase 2 (Sclerotinia sclerotiorum (strain ATCC 18683 / 1980 / Ss-1) (White mold)).